The primary structure comprises 392 residues: MALQPAAGARDLNPHQVETNRNITERLARVFRLWGYDEVSPPRVERMKTLMAGGAIASRDIVRLVADDPLGLRPEMTASIARAACTRLATRPRPMRLWASGTVFRSRAADEGGQCIEENLQSGVELFGVAAIEAEMELLSLLMASIASLKLGPSTQPRLLLGHTQLMELILSPYEGPKRDAVRWALVHFDRLAVETMELLPNERKTLLSLMECRGTPKDVLQQLRHLFGQQPVFEDLDRLCSLLSKTALEQDIALQLDPTFQPQFELYTGLVFQLVCNGRSAPVVLARGGRYDELVQRCGAPENQAFGAGFSLAIDPIRELLVEDESAKADTTDVLVAYSSNSNLETALDHQQQWHAKGHSAVLELQPIRSMDEAQALAQARGDLQLDWVDL.

Belongs to the class-II aminoacyl-tRNA synthetase family. HisZ subfamily. In terms of assembly, heteromultimer composed of HisG and HisZ subunits.

The protein localises to the cytoplasm. The protein operates within amino-acid biosynthesis; L-histidine biosynthesis; L-histidine from 5-phospho-alpha-D-ribose 1-diphosphate: step 1/9. In terms of biological role, required for the first step of histidine biosynthesis. May allow the feedback regulation of ATP phosphoribosyltransferase activity by histidine. The sequence is that of ATP phosphoribosyltransferase regulatory subunit from Synechococcus sp. (strain CC9902).